We begin with the raw amino-acid sequence, 563 residues long: Putative cysteine ligase BshC (563 aa).

It belongs to the BshC family.

The sequence is that of Putative cysteine ligase BshC from Chlorobium phaeobacteroides (strain BS1).